The following is a 554-amino-acid chain: Suppressor of hairless homolog (554 aa).

Residues 1–31 (MYHPHHLPAHGQVQSHQHREDAAATSSRDVN) are disordered. 3 consecutive DNA-binding regions follow at residues 83 to 90 (KSYGNEKR), 218 to 227 (RLRSQTVSTR), and 291 to 323 (RKVD…ERMY). In terms of domain architecture, IPT/TIG spans 381-471 (PNVHSLQLNG…YPTNLTFTFT (91 aa)). The segment at 489-554 (GSKRPSASMP…NGANMLRTAS (66 aa)) is disordered. Residues 508-519 (DSGRGNESDRGD) show a composition bias toward basic and acidic residues.

Belongs to the Su(H) family. In terms of assembly, interacts with activated Notch proteins.

The protein localises to the nucleus. Its function is as follows. Transcriptional regulator that plays a central role in Notch signaling, a signaling pathway involved in cell-cell communication that regulates a broad spectrum of cell-fate determinations. Acts as a transcriptional repressor when it is not associated with Notch proteins. When associated with some Notch protein, it acts as a transcriptional activator that activates transcription of Notch target genes. Required for the transcriptional expression of Brachyury, suggesting that it participates in notochord differentiation. The chain is Suppressor of hairless homolog (Su(H)) from Ciona intestinalis (Transparent sea squirt).